A 268-amino-acid chain; its full sequence is Unknown seed protein USP (268 aa).

A signal peptide spans 1 to 25 (MEFAHLTVLSLFCLAFVGITATSSG). A BURP domain is found at 68–259 (LFFEHDLHPG…GNKAAAWVPN (192 aa)).

In terms of tissue distribution, expressed in seeds. Detected only in the embryo. In germinating seedlings, detected in roots, root caps, root hairs, vascular bundle, mesophyll cells and epidermal cells of the cotyledons and the hypocotyl.

It localises to the golgi apparatus. It is found in the golgi stack. Its subcellular location is the prevacuolar compartment. Associated with the protein storage vacuole formation. In Vicia faba (Broad bean), this protein is Unknown seed protein USP.